The primary structure comprises 156 residues: Small ribosomal subunit protein uS7 (156 aa).

The protein belongs to the universal ribosomal protein uS7 family. In terms of assembly, part of the 30S ribosomal subunit. Contacts proteins S9 and S11.

Its function is as follows. One of the primary rRNA binding proteins, it binds directly to 16S rRNA where it nucleates assembly of the head domain of the 30S subunit. Is located at the subunit interface close to the decoding center, probably blocks exit of the E-site tRNA. This Nitrosococcus oceani (strain ATCC 19707 / BCRC 17464 / JCM 30415 / NCIMB 11848 / C-107) protein is Small ribosomal subunit protein uS7.